The primary structure comprises 147 residues: Globin, major monomeric component (147 aa).

Residues glycine 1 to glutamine 146 form the Globin domain. Histidine 90 contributes to the heme b binding site.

It belongs to the globin family. In terms of assembly, monomer.

The sequence is that of Globin, major monomeric component from Glycera dibranchiata (Bloodworm).